The chain runs to 130 residues: 3-aminoacrylate deaminase RutC (130 aa).

The protein belongs to the RutC family.

The catalysed reaction is (Z)-3-aminoacrylate + H2O + H(+) = 3-oxopropanoate + NH4(+). Involved in pyrimidine catabolism. Catalyzes the deamination of 3-aminoacrylate to malonic semialdehyde, a reaction that can also occur spontaneously. RutC may facilitate the reaction and modulate the metabolic fitness, rather than catalyzing essential functions. The chain is 3-aminoacrylate deaminase RutC from Klebsiella pneumoniae (strain 342).